The sequence spans 333 residues: Meiotic drive suppressor wtf9 (333 aa).

Positions 1-69 (MKNNYTSLKS…ENHSSGTTDN (69 aa)) are disordered. Positions 19-30 (KTDHEIDLEKGP) are enriched in basic and acidic residues. 4 helical membrane passes run 73-95 (LLIK…VCYL), 108-130 (VEWT…LTYF), 174-191 (WVVI…TLFL), and 204-226 (LICS…RLPF).

It belongs to the WTF family. Homomer. Interacts with other proteins that exhibit high sequence similarity.

It localises to the spore membrane. The protein localises to the vacuole membrane. Acts as a suppressor component of the dual wtf meiotic drive system, and can suppress but not confer meiotic drive by compatible poisons. Wtf meiotic drive systems promote unequal transmission of alleles from the parental zygote to progeny spores by encoding a poison and an antidote from the same locus; the poison is trans-acting and forms toxic aggregates in all spores within an ascus, wherease the antidote is spore-specific and targets aggregates for degradation by the vacuole. Meiotic drive by wtf systems therefore lead to poisoning of all progeny that do not inherit the dual poison/antidote allele, or express a compatible antidote. The sequence is that of Meiotic drive suppressor wtf9 from Schizosaccharomyces pombe (strain 972 / ATCC 24843) (Fission yeast).